A 76-amino-acid polypeptide reads, in one-letter code: Large ribosomal subunit protein bL31 (76 aa).

4 residues coordinate Zn(2+): C16, C18, C37, and C40.

The protein belongs to the bacterial ribosomal protein bL31 family. Type A subfamily. Part of the 50S ribosomal subunit. Requires Zn(2+) as cofactor.

In terms of biological role, binds the 23S rRNA. This is Large ribosomal subunit protein bL31 from Solibacter usitatus (strain Ellin6076).